The following is a 603-amino-acid chain: Myotubularin (603 aa).

A compositionally biased stretch (polar residues) spans 1–13 (MASASTSKYNSHS). The segment at 1–25 (MASASTSKYNSHSLENESIKRTSRD) is disordered. Residues Ser-13 and Ser-18 each carry the phosphoserine modification. Residues 14 to 25 (LENESIKRTSRD) show a composition bias toward basic and acidic residues. The GRAM domain maps to 29–97 (RDLTEAVPRL…GVISRIEKMG (69 aa)). Residues 163-538 (GWTVYNPVEE…RHLELWVNYY (376 aa)) enclose the Myotubularin phosphatase domain. A 1,2-diacyl-sn-glycero-3-phospho-(1D-myo-inositol-3,5-bisphosphate)-binding residues include Asn-288, Asn-313, and Ile-314. Residues Asn-288, Asn-313, and Ile-314 each coordinate a 1,2-diacyl-sn-glycero-3-phospho-(1D-myo-inositol-3-phosphate). Cys-375 (phosphocysteine intermediate) is an active-site residue. Positions 376, 377, 378, 379, 380, 381, 417, and 421 each coordinate a 1,2-diacyl-sn-glycero-3-phospho-(1D-myo-inositol-3,5-bisphosphate). Positions 376, 377, 378, 379, 380, and 381 each coordinate a 1,2-diacyl-sn-glycero-3-phospho-(1D-myo-inositol-3-phosphate). Arg-421 contributes to the a 1,2-diacyl-sn-glycero-3-phospho-(1D-myo-inositol-3-phosphate) binding site. Phosphothreonine is present on Thr-495. Residues 579–603 (SAKLSDPPTSPSSPSQMMPHVQTHF) are disordered. The residue at position 588 (Ser-588) is a Phosphoserine.

This sequence belongs to the protein-tyrosine phosphatase family. Non-receptor class myotubularin subfamily. Heterodimer with MTMR12. Interacts with KMT2A/MLL1 (via SET domain). Interacts with DES in skeletal muscle but not in cardiac muscle. Interacts with SPEG.

The protein localises to the cytoplasm. It is found in the cell membrane. It localises to the cell projection. Its subcellular location is the filopodium. The protein resides in the ruffle. The protein localises to the late endosome. It is found in the myofibril. It localises to the sarcomere. It carries out the reaction a 1,2-diacyl-sn-glycero-3-phospho-(1D-myo-inositol-3-phosphate) + H2O = a 1,2-diacyl-sn-glycero-3-phospho-(1D-myo-inositol) + phosphate. It catalyses the reaction a 1,2-diacyl-sn-glycero-3-phospho-(1D-myo-inositol-3,5-bisphosphate) + H2O = a 1,2-diacyl-sn-glycero-3-phospho-(1D-myo-inositol-5-phosphate) + phosphate. The enzyme catalyses 1,2-dioctanoyl-sn-glycero-3-phospho-(1-D-myo-inositol-3-phosphate) + H2O = 1,2-dioctanoyl-sn-glycero-3-phospho-(1D-myo-inositol) + phosphate. The catalysed reaction is 1,2-dioctanoyl-sn-glycero-3-phospho-(1D-myo-inositol-3,5-bisphosphate) + H2O = 1,2-dioctanoyl-sn-glycero-3-phospho-(1D-myo-inositol-5-phosphate) + phosphate. It carries out the reaction 1,2-dihexadecanoyl-sn-glycero-3-phospho-(1D-myo-inositol-3,5-phosphate) + H2O = 1,2-dihexadecanoyl-sn-glycero-3-phospho-(1D-myo-inositol-5-phosphate) + phosphate. With respect to regulation, allosterically activated by phosphatidylinositol 5-phosphate (PI5P). In terms of biological role, lipid phosphatase which dephosphorylates phosphatidylinositol 3-monophosphate (PI3P) and phosphatidylinositol 3,5-bisphosphate (PI(3,5)P2). Has also been shown to dephosphorylate phosphotyrosine- and phosphoserine-containing peptides. Negatively regulates EGFR degradation through regulation of EGFR trafficking from the late endosome to the lysosome. Plays a role in vacuolar formation and morphology. Regulates desmin intermediate filament assembly and architecture. Plays a role in mitochondrial morphology and positioning. Required for skeletal muscle maintenance but not for myogenesis. In skeletal muscles, stabilizes MTMR12 protein levels. The protein is Myotubularin of Homo sapiens (Human).